Here is a 76-residue protein sequence, read N- to C-terminus: Small ribosomal subunit protein bS21C (76 aa).

Residues Gly-52–Lys-76 form a disordered region.

Belongs to the bacterial ribosomal protein bS21 family.

This Agrobacterium fabrum (strain C58 / ATCC 33970) (Agrobacterium tumefaciens (strain C58)) protein is Small ribosomal subunit protein bS21C (rpsU3).